The sequence spans 92 residues: Small ribosomal subunit protein uS19 (92 aa).

The protein belongs to the universal ribosomal protein uS19 family.

In terms of biological role, protein S19 forms a complex with S13 that binds strongly to the 16S ribosomal RNA. In Vibrio campbellii (strain ATCC BAA-1116), this protein is Small ribosomal subunit protein uS19.